A 1000-amino-acid chain; its full sequence is Peroxisomal ATPase PEX6 (1000 aa).

742 to 749 lines the ATP pocket; it reads GPPGTGKT.

The protein belongs to the AAA ATPase family. Interacts with PEX1; forming the PEX1-PEX6 AAA ATPase complex, which is composed of a heterohexamer formed by a trimer of PEX1-PEX6 dimers.

It is found in the cytoplasm. It localises to the cytosol. The protein resides in the peroxisome membrane. It carries out the reaction ATP + H2O = ADP + phosphate + H(+). In terms of biological role, component of the PEX1-PEX6 AAA ATPase complex, a protein dislocase complex that mediates the ATP-dependent extraction of the PEX5 receptor from peroxisomal membranes, an essential step for PEX5 recycling. Specifically recognizes PEX5 monoubiquitinated at 'Cys-6', and pulls it out of the peroxisome lumen through the PEX2-PEX10-PEX12 retrotranslocation channel. Extraction by the PEX1-PEX6 AAA ATPase complex is accompanied by unfolding of the TPR repeats and release of bound cargo from PEX5. This Kluyveromyces lactis (strain ATCC 8585 / CBS 2359 / DSM 70799 / NBRC 1267 / NRRL Y-1140 / WM37) (Yeast) protein is Peroxisomal ATPase PEX6 (PEX6).